A 518-amino-acid polypeptide reads, in one-letter code: Protein FAM98A (518 aa).

Disordered stretches follow at residues Gly300 to Ser415 and Gly434 to Ser518. Basic and acidic residues predominate over residues Val302–Glu311. Gly residues-rich tracts occupy residues Gly349–Gly364, Trp383–Asp396, and Gln405–Ser415. Positions Arg447–Gly459 are enriched in basic and acidic residues. The segment covering Gly460 to Gly484 has biased composition (gly residues). Low complexity predominate over residues Tyr488–Gln504. Over residues Tyr505–Ser518 the composition is skewed to polar residues.

It belongs to the FAM98 family. As to quaternary structure, interacts (via N- and C-terminus) with DDX1. Interacts (via N- and C-terminus) with C14orf166. Interacts with FAM98B. Interacts with PLEKHM1 (via N- and C-terminus).

Functionally, positively stimulates PRMT1-induced protein arginine methylation. Involved in skeletal homeostasis. Positively regulates lysosome peripheral distribution and ruffled border formation in osteoclasts. This chain is Protein FAM98A, found in Pongo abelii (Sumatran orangutan).